We begin with the raw amino-acid sequence, 976 residues long: MKRGKLWGRLVSAAGLSLSIFLSSIGNVSTAYAMESNDALVLDETKENTESATDASSNEASDAEADNDTDEAITDASSKELSAENDGASESDSSFDEYDHTALPETDEITVTAAGELSTAKAELYTLAPREAREADNSLVTRDSIHDGAILHAFCWSFNTIADNMADIADAGYTAVQTSPINECLSTNPGMNLHGPDGMWYYHYQPTDWVIGNYQLGSRDEFKHMCDVADEYGVAVIVDILPNHTTPSTGSIAKALMEAAGGSDALYHATGKIGGGYTDRLELTYYSMGGLPDVDTENTGFQQYFYEFLKDCVYLGADGFRIDTAKHISLPDDPVPSDYSDAGRNTFYPNMREALNEYSEEVGTKSYDELFVYGEVLQGTNDRLAAYQQYIGGTTASNYGSSLRSALSSGNLSVNRLLDYQIYDDTAYGSTYTADTEKLVTWVESHDNYMNDSESCWKSIDDDMVIMGWSIIAARDAGTPLFFSRPNNSSAENPYGDNLIGAAGSPIYKAPEVKAVNLFREKMGEADEYLSNPGGNIQTLMIERYNDTVQGAVIVNAAQTRTTISTETHLSDGIYPDQVEGSNSVFLVKDGVLSGSVEGEGVVVLSEKMDGTGKVVSFYNNKNWNGVVARVDNAEETLDTIDENDGWFQVTVLDDEFTIRFESADGKEVSPEFQITAESGTFATPDSSELYYSKAEAEEGLGIHTYPVYFFNTENWGSVYTYGWLDGGAQLFGGWPGTVAVNEGSGWYRADVKTTGEITAFNLIFNNGNGIQTVNVEGITPDSKDIYLAVDAEKSNGQLIVNRYEDKESAEKALGVSGSYTTAYFYNTEGWDKVCAYTWGATALGDWPGKELTQDEDGWYSVVLPAGPSEDLNIIFNNGNNGKQTNDMKISDMKYRFILNNGISYQKYGSKKDAMEAIAGAGDVTYETVYFYNEKADDANWKNVYLYVFGGTDGEYNNLVGTWPGKLMEKEEDSNG.

A signal peptide spans 1–33; sequence MKRGKLWGRLVSAAGLSLSIFLSSIGNVSTAYA. Residues 45 to 98 form a disordered region; sequence TKENTESATDASSNEASDAEADNDTDEAITDASSKELSAENDGASESDSSFDEY. Positions 50-60 are enriched in low complexity; the sequence is ESATDASSNEA. Acidic residues-rich tracts occupy residues 61-73 and 87-96; these read SDAE…DEAI and GASESDSSFD. Residues Asn243, Thr284, and Asp293 each contribute to the Ca(2+) site. Catalysis depends on Asp323, which acts as the Nucleophile. His327 is a binding site for Ca(2+). The active-site Proton donor is the Glu375.

This sequence belongs to the glycosyl hydrolase 13 family. As to quaternary structure, monomer. Ca(2+) serves as cofactor.

The catalysed reaction is Endohydrolysis of (1-&gt;4)-alpha-D-glucosidic linkages in polysaccharides containing three or more (1-&gt;4)-alpha-linked D-glucose units.. The chain is Alpha-amylase (amyA) from Butyrivibrio fibrisolvens.